Consider the following 429-residue polypeptide: UDP-N-acetylglucosamine 1-carboxyvinyltransferase (429 aa).

Phosphoenolpyruvate is bound at residue 22–23 (KN). Residue Arg102 participates in UDP-N-acetyl-alpha-D-glucosamine binding. Catalysis depends on Cys126, which acts as the Proton donor. Residue Cys126 is modified to 2-(S-cysteinyl)pyruvic acid O-phosphothioketal. Residues 171-174 (KVSV), Asp316, and Ile338 each bind UDP-N-acetyl-alpha-D-glucosamine.

The protein belongs to the EPSP synthase family. MurA subfamily.

The protein resides in the cytoplasm. The catalysed reaction is phosphoenolpyruvate + UDP-N-acetyl-alpha-D-glucosamine = UDP-N-acetyl-3-O-(1-carboxyvinyl)-alpha-D-glucosamine + phosphate. Its pathway is cell wall biogenesis; peptidoglycan biosynthesis. Its function is as follows. Cell wall formation. Adds enolpyruvyl to UDP-N-acetylglucosamine. In Azorhizobium caulinodans (strain ATCC 43989 / DSM 5975 / JCM 20966 / LMG 6465 / NBRC 14845 / NCIMB 13405 / ORS 571), this protein is UDP-N-acetylglucosamine 1-carboxyvinyltransferase.